Here is a 388-residue protein sequence, read N- to C-terminus: Succinate--CoA ligase [ADP-forming] subunit beta (388 aa).

Residues 9–244 (KQLFADYGLP…PSQEDPREAH (236 aa)) form the ATP-grasp domain. ATP-binding positions include Lys-46, 53-55 (GRG), Glu-99, Thr-102, and Glu-107. 2 residues coordinate Mg(2+): Asn-199 and Asp-213. Substrate contacts are provided by residues Asn-264 and 321 to 323 (GIV).

Belongs to the succinate/malate CoA ligase beta subunit family. Heterotetramer of two alpha and two beta subunits. The cofactor is Mg(2+).

The catalysed reaction is succinate + ATP + CoA = succinyl-CoA + ADP + phosphate. It carries out the reaction GTP + succinate + CoA = succinyl-CoA + GDP + phosphate. Its pathway is carbohydrate metabolism; tricarboxylic acid cycle; succinate from succinyl-CoA (ligase route): step 1/1. Its function is as follows. Succinyl-CoA synthetase functions in the citric acid cycle (TCA), coupling the hydrolysis of succinyl-CoA to the synthesis of either ATP or GTP and thus represents the only step of substrate-level phosphorylation in the TCA. The beta subunit provides nucleotide specificity of the enzyme and binds the substrate succinate, while the binding sites for coenzyme A and phosphate are found in the alpha subunit. The chain is Succinate--CoA ligase [ADP-forming] subunit beta from Hahella chejuensis (strain KCTC 2396).